The chain runs to 722 residues: NCK-interacting protein with SH3 domain (722 aa).

In terms of domain architecture, SH3 spans 1-58 (MYRALYAFRSAEPNALAFAAGETFLVLERSSAHWWLAARARSGETGYVPPAYLRRLQG). 2 disordered regions span residues 101-122 (KETLSRRGPSASSVAVMTSSTS) and 149-286 (PSSE…ASDD). Residues 110-121 (SASSVAVMTSST) are compositionally biased toward low complexity. The residue at position 120 (Ser-120) is a Phosphoserine. Over residues 169–185 (QIPPQPRRAAPTTPPPP) the composition is skewed to pro residues. The Nuclear localization signal motif lies at 175-192 (RRAAPTTPPPPVKRRDRE). Residue Thr-181 is modified to Phosphothreonine. Low complexity predominate over residues 206 to 240 (PSGGNSVSSGSSVSSTSLDTLYTSSSPSEPGSSCS). Ser-294 is subject to Phosphoserine.

In terms of assembly, associates with the intermediate filaments, vimentin and desmin. Binds the first and third SH3 domains of NCK. Binds the proline-rich domains of N-WASP through its SH3 domain. Similarly, binds diaphanous protein homolog 1 (DRF1). Binds the SH3 domains of GRB2 through its proline-rich domains. Interacts with Helicobacter pylori toxin vacA. Isoform 4 interacts with FHOD1. Interacts with FASLG. Interacts with TMIGD2. Highest expression in heart, brain, skeletal muscle, kidney and liver. Lower levels in placenta, lung, small intestine and leukocytes. Weak expression in colon, thymus and spleen.

Its subcellular location is the nucleus. In terms of biological role, has an important role in stress fiber formation induced by active diaphanous protein homolog 1 (DRF1). Induces microspike formation, in vivo. In vitro, stimulates N-WASP-induced ARP2/3 complex activation in the absence of CDC42. May play an important role in the maintenance of sarcomeres and/or in the assembly of myofibrils into sarcomeres. Implicated in regulation of actin polymerization and cell adhesion. Plays a role in angiogenesis. This is NCK-interacting protein with SH3 domain (NCKIPSD) from Homo sapiens (Human).